The sequence spans 400 residues: Endoglucanase 5A (400 aa).

The first 26 residues, 1-26, serve as a signal peptide directing secretion; that stretch reads MKKITTIFVVLLMTVALFSIGNTTAA. Substrate contacts are provided by residues H61, 65–66, Y92, and H127; that span reads WY. E165 (proton donor) is an active-site residue. Position 228 (Y228) interacts with substrate. The active-site Nucleophile is the E254. Residues 260 to 261, W288, and 293 to 295 each bind substrate; these read AT and KDE. Positions 328-363 are disordered; the sequence is ESASIPPSDPTPPSDPGEPDPTPPSDPGEYPAWDPN. Positions 334 to 353 are enriched in pro residues; that stretch reads PSDPTPPSDPGEPDPTPPSD. The 40-residue stretch at 357–396 folds into the Chitin-binding type-3 domain; sequence YPAWDPNQIYTNEIVYHNGQLWQAKWWTQNQEPGDPYGPW.

This sequence belongs to the glycosyl hydrolase 5 (cellulase A) family. As to quaternary structure, monomer.

It localises to the secreted. It carries out the reaction Endohydrolysis of (1-&gt;4)-beta-D-glucosidic linkages in cellulose, lichenin and cereal beta-D-glucans.. In Salipaludibacillus agaradhaerens (Bacillus agaradhaerens), this protein is Endoglucanase 5A (cel5A).